We begin with the raw amino-acid sequence, 443 residues long: Glutamate-1-semialdehyde 2,1-aminomutase (443 aa).

At K281 the chain carries N6-(pyridoxal phosphate)lysine.

It belongs to the class-III pyridoxal-phosphate-dependent aminotransferase family. HemL subfamily. In terms of assembly, homodimer. Pyridoxal 5'-phosphate serves as cofactor.

Its subcellular location is the cytoplasm. It carries out the reaction (S)-4-amino-5-oxopentanoate = 5-aminolevulinate. It participates in porphyrin-containing compound metabolism; protoporphyrin-IX biosynthesis; 5-aminolevulinate from L-glutamyl-tRNA(Glu): step 2/2. This is Glutamate-1-semialdehyde 2,1-aminomutase from Leptospira interrogans serogroup Icterohaemorrhagiae serovar Lai (strain 56601).